The following is a 71-amino-acid chain: Sperm-associated antigen 11A (71 aa).

The first 19 residues, 1–19, serve as a signal peptide directing secretion; that stretch reads MIPRLLPFFASLLFAALLF. Intrachain disulfides connect cysteine 32–cysteine 61, cysteine 39–cysteine 54, and cysteine 44–cysteine 62.

Belongs to the beta-defensin family.

It localises to the secreted. In terms of biological role, has antimicrobial activity against E.coli. Plays a role in the defense response in the male reproductive tract, contributing to sperm maturation, storage and protection. In Mus musculus (Mouse), this protein is Sperm-associated antigen 11A.